A 293-amino-acid chain; its full sequence is Nucleotide-binding protein cauri_1197 (293 aa).

16-23 serves as a coordination point for ATP; it reads GMSGGGLT. 67–70 serves as a coordination point for GTP; that stretch reads DVRS.

The protein belongs to the RapZ-like family.

Functionally, displays ATPase and GTPase activities. In Corynebacterium aurimucosum (strain ATCC 700975 / DSM 44827 / CIP 107346 / CN-1) (Corynebacterium nigricans), this protein is Nucleotide-binding protein cauri_1197.